The following is a 27-amino-acid chain: Protamine-B (27 aa).

Positions 1–27 (ARRRRRSSRPQRRRRRRRHGRRRRGRR) are disordered.

In terms of tissue distribution, testis.

Its subcellular location is the nucleus. The protein resides in the chromosome. Its function is as follows. Protamines substitute for histones in the chromatin of sperm during the haploid phase of spermatogenesis. They compact sperm DNA into a highly condensed, stable and inactive complex. The protein is Protamine-B of Acipenser stellatus (Sevruga).